Consider the following 510-residue polypeptide: Probable cytosol aminopeptidase (510 aa).

Mn(2+) is bound by residues K272 and D277. The active site involves K284. 3 residues coordinate Mn(2+): D296, D355, and E357. R359 is an active-site residue.

It belongs to the peptidase M17 family. Mn(2+) serves as cofactor.

The protein localises to the cytoplasm. It catalyses the reaction Release of an N-terminal amino acid, Xaa-|-Yaa-, in which Xaa is preferably Leu, but may be other amino acids including Pro although not Arg or Lys, and Yaa may be Pro. Amino acid amides and methyl esters are also readily hydrolyzed, but rates on arylamides are exceedingly low.. The enzyme catalyses Release of an N-terminal amino acid, preferentially leucine, but not glutamic or aspartic acids.. Functionally, presumably involved in the processing and regular turnover of intracellular proteins. Catalyzes the removal of unsubstituted N-terminal amino acids from various peptides. The protein is Probable cytosol aminopeptidase of Synechococcus sp. (strain JA-2-3B'a(2-13)) (Cyanobacteria bacterium Yellowstone B-Prime).